We begin with the raw amino-acid sequence, 139 residues long: Large ribosomal subunit protein uL14A (139 aa).

It belongs to the universal ribosomal protein uL14 family. As to quaternary structure, component of the large ribosomal subunit (LSU). Mature yeast ribosomes consist of a small (40S) and a large (60S) subunit. The 40S small subunit contains 1 molecule of ribosomal RNA (18S rRNA) and at least 33 different proteins. The large 60S subunit contains 3 rRNA molecules (25S, 5.8S and 5S rRNA) and at least 46 different proteins.

The protein localises to the cytoplasm. The protein resides in the nucleus. In terms of biological role, component of the ribosome, a large ribonucleoprotein complex responsible for the synthesis of proteins in the cell. The small ribosomal subunit (SSU) binds messenger RNAs (mRNAs) and translates the encoded message by selecting cognate aminoacyl-transfer RNA (tRNA) molecules. The large subunit (LSU) contains the ribosomal catalytic site termed the peptidyl transferase center (PTC), which catalyzes the formation of peptide bonds, thereby polymerizing the amino acids delivered by tRNAs into a polypeptide chain. The nascent polypeptides leave the ribosome through a tunnel in the LSU and interact with protein factors that function in enzymatic processing, targeting, and the membrane insertion of nascent chains at the exit of the ribosomal tunnel. The protein is Large ribosomal subunit protein uL14A (rpl2301) of Schizosaccharomyces pombe (strain 972 / ATCC 24843) (Fission yeast).